The sequence spans 337 residues: Ketol-acid reductoisomerase (NADP(+)) (337 aa).

The KARI N-terminal Rossmann domain maps to 3 to 183 (IDVFYDDDAD…GGGRAGVIPT (181 aa)). NADP(+)-binding positions include 26–29 (YGSQ), R49, S52, S54, and 84–87 (DTSQ). H109 is a catalytic residue. G135 is an NADP(+) binding site. Residues 184 to 329 (TFEAETVTDL…EKLRDLMSWV (146 aa)) form the KARI C-terminal knotted domain. 4 residues coordinate Mg(2+): D192, E196, E228, and E232. S253 contributes to the substrate binding site.

It belongs to the ketol-acid reductoisomerase family. It depends on Mg(2+) as a cofactor.

It catalyses the reaction (2R)-2,3-dihydroxy-3-methylbutanoate + NADP(+) = (2S)-2-acetolactate + NADPH + H(+). The enzyme catalyses (2R,3R)-2,3-dihydroxy-3-methylpentanoate + NADP(+) = (S)-2-ethyl-2-hydroxy-3-oxobutanoate + NADPH + H(+). The protein operates within amino-acid biosynthesis; L-isoleucine biosynthesis; L-isoleucine from 2-oxobutanoate: step 2/4. It participates in amino-acid biosynthesis; L-valine biosynthesis; L-valine from pyruvate: step 2/4. Involved in the biosynthesis of branched-chain amino acids (BCAA). Catalyzes an alkyl-migration followed by a ketol-acid reduction of (S)-2-acetolactate (S2AL) to yield (R)-2,3-dihydroxy-isovalerate. In the isomerase reaction, S2AL is rearranged via a Mg-dependent methyl migration to produce 3-hydroxy-3-methyl-2-ketobutyrate (HMKB). In the reductase reaction, this 2-ketoacid undergoes a metal-dependent reduction by NADPH to yield (R)-2,3-dihydroxy-isovalerate. This Corynebacterium urealyticum (strain ATCC 43042 / DSM 7109) protein is Ketol-acid reductoisomerase (NADP(+)).